A 268-amino-acid polypeptide reads, in one-letter code: Ribosomal RNA small subunit methyltransferase A (268 aa).

Residues N18, L20, G45, E66, D91, and N112 each contribute to the S-adenosyl-L-methionine site.

This sequence belongs to the class I-like SAM-binding methyltransferase superfamily. rRNA adenine N(6)-methyltransferase family. RsmA subfamily.

It localises to the cytoplasm. It carries out the reaction adenosine(1518)/adenosine(1519) in 16S rRNA + 4 S-adenosyl-L-methionine = N(6)-dimethyladenosine(1518)/N(6)-dimethyladenosine(1519) in 16S rRNA + 4 S-adenosyl-L-homocysteine + 4 H(+). Its function is as follows. Specifically dimethylates two adjacent adenosines (A1518 and A1519) in the loop of a conserved hairpin near the 3'-end of 16S rRNA in the 30S particle. May play a critical role in biogenesis of 30S subunits. The chain is Ribosomal RNA small subunit methyltransferase A from Shewanella baltica (strain OS223).